The following is an 81-amino-acid chain: Accessory gland protein Acp63F (81 aa).

The signal sequence occupies residues 1–16 (MKAIIVFILFISSVHA).

In terms of tissue distribution, main cells of accessory gland and seminal fluid.

It localises to the secreted. Responsible for physiological and behavioral changes in mated female flies. The chain is Accessory gland protein Acp63F (Acp63F) from Drosophila melanogaster (Fruit fly).